A 100-amino-acid chain; its full sequence is Small ribosomal subunit protein uS14 (100 aa).

This sequence belongs to the universal ribosomal protein uS14 family. Part of the 30S ribosomal subunit. Contacts proteins S3 and S10.

Functionally, binds 16S rRNA, required for the assembly of 30S particles and may also be responsible for determining the conformation of the 16S rRNA at the A site. This Trichormus variabilis (strain ATCC 29413 / PCC 7937) (Anabaena variabilis) protein is Small ribosomal subunit protein uS14.